The primary structure comprises 240 residues: UDP-2,3-diacylglucosamine hydrolase (240 aa).

Mn(2+) contacts are provided by Asp-8, His-10, Asp-41, Asn-79, and His-114. Position 79–80 (79–80 (NR)) interacts with substrate. Substrate-binding residues include Asp-122, Ser-160, Asn-164, Lys-167, and His-195. 2 residues coordinate Mn(2+): His-195 and His-197.

Belongs to the LpxH family. Mn(2+) serves as cofactor.

It is found in the cell inner membrane. The enzyme catalyses UDP-2-N,3-O-bis[(3R)-3-hydroxytetradecanoyl]-alpha-D-glucosamine + H2O = 2-N,3-O-bis[(3R)-3-hydroxytetradecanoyl]-alpha-D-glucosaminyl 1-phosphate + UMP + 2 H(+). It functions in the pathway glycolipid biosynthesis; lipid IV(A) biosynthesis; lipid IV(A) from (3R)-3-hydroxytetradecanoyl-[acyl-carrier-protein] and UDP-N-acetyl-alpha-D-glucosamine: step 4/6. Functionally, hydrolyzes the pyrophosphate bond of UDP-2,3-diacylglucosamine to yield 2,3-diacylglucosamine 1-phosphate (lipid X) and UMP by catalyzing the attack of water at the alpha-P atom. Involved in the biosynthesis of lipid A, a phosphorylated glycolipid that anchors the lipopolysaccharide to the outer membrane of the cell. This Enterobacter sp. (strain 638) protein is UDP-2,3-diacylglucosamine hydrolase.